Reading from the N-terminus, the 138-residue chain is Putative nickel-responsive regulator (138 aa).

Residues His-78, His-89, His-91, and Cys-97 each coordinate Ni(2+).

Belongs to the transcriptional regulatory CopG/NikR family. Ni(2+) is required as a cofactor.

Functionally, transcriptional regulator. The polypeptide is Putative nickel-responsive regulator (Thermococcus onnurineus (strain NA1)).